Reading from the N-terminus, the 348-residue chain is 3-isopropylmalate dehydrogenase (348 aa).

Glycine 76–glutamate 87 serves as a coordination point for NAD(+). Substrate-binding residues include arginine 94, arginine 104, arginine 132, and aspartate 217. Mg(2+) contacts are provided by aspartate 217, aspartate 241, and aspartate 245. Glycine 275–asparagine 287 is an NAD(+) binding site.

The protein belongs to the isocitrate and isopropylmalate dehydrogenases family. LeuB type 1 subfamily. Homodimer. The cofactor is Mg(2+). Mn(2+) is required as a cofactor.

The protein resides in the cytoplasm. The catalysed reaction is (2R,3S)-3-isopropylmalate + NAD(+) = 4-methyl-2-oxopentanoate + CO2 + NADH. It participates in amino-acid biosynthesis; L-leucine biosynthesis; L-leucine from 3-methyl-2-oxobutanoate: step 3/4. In terms of biological role, catalyzes the oxidation of 3-carboxy-2-hydroxy-4-methylpentanoate (3-isopropylmalate) to 3-carboxy-4-methyl-2-oxopentanoate. The product decarboxylates to 4-methyl-2 oxopentanoate. The sequence is that of 3-isopropylmalate dehydrogenase from Staphylococcus aureus (strain Mu50 / ATCC 700699).